Reading from the N-terminus, the 110-residue chain is Small ribosomal subunit protein uS17 (110 aa).

The protein belongs to the universal ribosomal protein uS17 family. Part of the 30S ribosomal subunit.

Its function is as follows. One of the primary rRNA binding proteins, it binds specifically to the 5'-end of 16S ribosomal RNA. The sequence is that of Small ribosomal subunit protein uS17 from Haloquadratum walsbyi (strain DSM 16790 / HBSQ001).